The sequence spans 881 residues: Regulatory protein GAL4 (881 aa).

Residues Cys11, Cys14, Cys21, Cys28, Cys31, and Cys38 each coordinate Zn(2+). The zn(2)-C6 fungal-type DNA-binding region spans 11–38 (CDICRLKKLKCSKEKPKCAKCLKNNWEC). At Tyr694 the chain carries Phosphotyrosine. Phosphoserine occurs at positions 696, 699, 703, and 712. The tract at residues 723-743 (RPPSRNSPVTIPRSTPSHRSV) is disordered. Positions 862–870 (DDVYNYLFD) match the 9aaTAD motif.

As to quaternary structure, binds DNA as a homodimer. Interacts directly with the mediator subunits GAL11/MED15 and SRB4/MED17. In terms of processing, association between GAL11 and GAL4 may serve to expedite phosphorylation of GAL4.

It localises to the nucleus. In terms of biological role, this protein is a positive regulator for the gene expression of the galactose-induced genes such as GAL1, GAL2, GAL7, GAL10, and MEL1 which code for the enzymes used to convert galactose to glucose. It recognizes a 17 base pair sequence in (5'-CGGRNNRCYNYNCNCCG-3') the upstream activating sequence (UAS-G) of these genes. The protein is Regulatory protein GAL4 (GAL4) of Saccharomyces cerevisiae (strain ATCC 204508 / S288c) (Baker's yeast).